A 99-amino-acid chain; its full sequence is MKTLVLVAVLGLASLYLLSYASEVQQISRDEEDFRALMASFGGIFDTEERGVDKEGCRKMFGDCWGDGDCCLHLGCKTRKLPPWTDKPYCAWDWTFGRK.

The first 21 residues, 1–21 (MKTLVLVAVLGLASLYLLSYA), serve as a signal peptide directing secretion. The propeptide occupies 22–50 (SEVQQISRDEEDFRALMASFGGIFDTEER). Intrachain disulfides connect C57–C71, C64–C76, and C70–C90.

This sequence belongs to the neurotoxin 10 (Hwtx-1) family. 25 (ICK4) subfamily. Expressed by the venom gland.

It localises to the secreted. In terms of biological role, ion channel inhibitor. This chain is U11-barytoxin-Tl1a, found in Trittame loki (Brush-footed trapdoor spider).